The primary structure comprises 331 residues: Ribosomal large subunit pseudouridine synthase D (331 aa).

Residues 25 to 97 (RRFDAVLAEL…IPLDILYEDE (73 aa)) form the S4 RNA-binding domain. The active site involves Asp-145.

This sequence belongs to the pseudouridine synthase RluA family.

It is found in the cytoplasm. The enzyme catalyses uridine(1911/1915/1917) in 23S rRNA = pseudouridine(1911/1915/1917) in 23S rRNA. Its function is as follows. Responsible for synthesis of pseudouridine from uracil at positions 1911, 1915 and 1917 in 23S ribosomal RNA. The polypeptide is Ribosomal large subunit pseudouridine synthase D (rluD) (Xylella fastidiosa (strain Temecula1 / ATCC 700964)).